Consider the following 286-residue polypeptide: Protein WVD2-like 1 (286 aa).

The disordered stretch occupies residues 31–101 (ETDEEFEVKE…ENKKHIDDED (71 aa)). Thr-32 is subject to Phosphothreonine. Residues 38-47 (VKECTEEKSL) show a composition bias toward basic and acidic residues. Residues 131–182 (AQRAEKRKEYYQKLEEKNQALEAERNELEQRQKDEQEAALKQLRKNLKFKAK) adopt a coiled-coil conformation. Residues 186 to 286 (NFYYEAPPAK…KPVNESSEEA (101 aa)) are disordered. Over residues 234 to 247 (TVSNRNRHSTGTVQ) the composition is skewed to polar residues.

This sequence belongs to the TPX2 family.

The protein resides in the cytoplasm. It localises to the cytoskeleton. In terms of biological role, microtubule-associated protein (MAP) that regulates the orientation of interphase cortical microtubules. Modulates both rotational polarity and anisotropic cell expansion during organ growth. Promotes clockwise root and etiolated hypocotyls coiling, clockwise leaf curling, but left-handed petiole twisting. The sequence is that of Protein WVD2-like 1 (WDL1) from Arabidopsis thaliana (Mouse-ear cress).